The primary structure comprises 365 residues: uncharacterized protein (365 aa).

Belongs to the NAD(P)-dependent epimerase/dehydratase family.

The protein localises to the cytoplasm. It localises to the nucleus. This is an uncharacterized protein from Schizosaccharomyces pombe (strain 972 / ATCC 24843) (Fission yeast).